Here is a 95-residue protein sequence, read N- to C-terminus: Aspartyl/glutamyl-tRNA(Asn/Gln) amidotransferase subunit C (95 aa).

It belongs to the GatC family. In terms of assembly, heterotrimer of A, B and C subunits.

It catalyses the reaction L-glutamyl-tRNA(Gln) + L-glutamine + ATP + H2O = L-glutaminyl-tRNA(Gln) + L-glutamate + ADP + phosphate + H(+). The catalysed reaction is L-aspartyl-tRNA(Asn) + L-glutamine + ATP + H2O = L-asparaginyl-tRNA(Asn) + L-glutamate + ADP + phosphate + 2 H(+). Allows the formation of correctly charged Asn-tRNA(Asn) or Gln-tRNA(Gln) through the transamidation of misacylated Asp-tRNA(Asn) or Glu-tRNA(Gln) in organisms which lack either or both of asparaginyl-tRNA or glutaminyl-tRNA synthetases. The reaction takes place in the presence of glutamine and ATP through an activated phospho-Asp-tRNA(Asn) or phospho-Glu-tRNA(Gln). The sequence is that of Aspartyl/glutamyl-tRNA(Asn/Gln) amidotransferase subunit C from Azorhizobium caulinodans (strain ATCC 43989 / DSM 5975 / JCM 20966 / LMG 6465 / NBRC 14845 / NCIMB 13405 / ORS 571).